The sequence spans 342 residues: MSKIIQAFNSSNRNYTPIWFMRQAGRYLPEYQMLRKTTNSFFELCYDPIKAAEVTLQPIARFDFDAAIIFSDILVLPDSLGINIRFINNLGPTAEKIPNLLDLQKLKIQNTKISKVYEAIDIVRKKLNKQKSLIGFCGGPWTVLTYILGYNSRNTPKFQEIKSNNKHELILDSINILTKHTIDHLENQILAGADIVQIFDSWAGILPYQEFSEYVIKPTSNIVKTLKEKFPHIKIIGFPKGAGKLYHKYTKETNVDGISCDYNLPLNEMLKLQKNALVQGNLNPNTILSEDSKIIEESVIKIMDTLSNNRFIFNLGHGILPETPIKNVELIVKLVKNYHSSE.

Residues 22–26 (RQAGR), phenylalanine 42, aspartate 72, tyrosine 146, serine 201, and histidine 317 each bind substrate.

It belongs to the uroporphyrinogen decarboxylase family. In terms of assembly, homodimer.

Its subcellular location is the cytoplasm. The enzyme catalyses uroporphyrinogen III + 4 H(+) = coproporphyrinogen III + 4 CO2. It functions in the pathway porphyrin-containing compound metabolism; protoporphyrin-IX biosynthesis; coproporphyrinogen-III from 5-aminolevulinate: step 4/4. In terms of biological role, catalyzes the decarboxylation of four acetate groups of uroporphyrinogen-III to yield coproporphyrinogen-III. The chain is Uroporphyrinogen decarboxylase from Orientia tsutsugamushi (strain Ikeda) (Rickettsia tsutsugamushi).